The chain runs to 345 residues: MTKKIVTLSGDGIGPEIMAAGLGVLDKVASKIEFDYDVDAKPFGGAGIDAEGHPLPKATLEAAKSADAILLAAIGGPKYDNAPVRPEQGLLAIRKELNLFANIRPVRIFDALKHLSPLKPERIEGVDFVVVRELTGGIYFGEHILEEDKARDINDYSADEIRRIMRRAFKIAQGRGKKVTSIDKQNVLATSKLWRKVADEVSLEFPDVTLEHQLVDSAAMIMITNPARFDVVVTENLFGDILSDESSVLPGTLGVMPSASHSENGPSLYEPIHGSAPDIAGQGIANPISMILSVAMMLRESFNETEGAELIENAVDKTLNQGILTRDLGGQASTAEMTAAIISNL.

76-87 (GPKYDNAPVRPE) is an NAD(+) binding site. Positions 94, 104, 132, and 216 each coordinate substrate. Residues Asp-216, Asp-240, and Asp-244 each contribute to the Mg(2+) site. 274–286 (GSAPDIAGQGIAN) contributes to the NAD(+) binding site.

The protein belongs to the isocitrate and isopropylmalate dehydrogenases family. LeuB type 1 subfamily. As to quaternary structure, homodimer. The cofactor is Mg(2+). Mn(2+) serves as cofactor.

The protein resides in the cytoplasm. The enzyme catalyses (2R,3S)-3-isopropylmalate + NAD(+) = 4-methyl-2-oxopentanoate + CO2 + NADH. It functions in the pathway amino-acid biosynthesis; L-leucine biosynthesis; L-leucine from 3-methyl-2-oxobutanoate: step 3/4. In terms of biological role, catalyzes the oxidation of 3-carboxy-2-hydroxy-4-methylpentanoate (3-isopropylmalate) to 3-carboxy-4-methyl-2-oxopentanoate. The product decarboxylates to 4-methyl-2 oxopentanoate. In Streptococcus thermophilus (strain CNRZ 1066), this protein is 3-isopropylmalate dehydrogenase.